A 1009-amino-acid chain; its full sequence is Regulator of telomere elongation helicase 1 homolog (1009 aa).

Positions 7 to 322 constitute a Helicase ATP-binding domain; sequence AGIPVHFPFE…KEMLLELEKA (316 aa). 42 to 49 is an ATP binding site; sequence SPTGTGKT. The [4Fe-4S] cluster site is built by Cys-146, Cys-164, Cys-173, and Cys-209. The DEAH box signature appears at 252 to 255; that stretch reads DEAH.

It belongs to the helicase family. RAD3/XPD subfamily.

Its subcellular location is the nucleus. The enzyme catalyses ATP + H2O = ADP + phosphate + H(+). Its function is as follows. A probable ATP-dependent DNA helicase implicated in DNA repair and the maintenance of genomic stability. Acts as an anti-recombinase to counteract toxic recombination and limit crossover during meiosis. Regulates meiotic recombination and crossover homeostasis by physically dissociating strand invasion events and thereby promotes noncrossover repair by meiotic synthesis dependent strand annealing (SDSA) as well as disassembly of D loop recombination intermediates. In Drosophila persimilis (Fruit fly), this protein is Regulator of telomere elongation helicase 1 homolog.